The following is a 342-amino-acid chain: Strictosidine synthase (342 aa).

Residues 1 to 20 (KLSDSQTMALFTVFLLFLSS) form the signal peptide. Residue Asn89 is glycosylated (N-linked (GlcNAc...) asparagine).

The protein belongs to the strictosidine synthase family. In terms of assembly, monomer.

It localises to the vacuole. The catalysed reaction is 3alpha(S)-strictosidine + H2O = secologanin + tryptamine. Its pathway is alkaloid biosynthesis; 3alpha(S)-strictosidine biosynthesis; 3alpha(S)-strictosidine from secologanin and tryptamine: step 1/1. Functionally, catalyzes the stereospecific condensation of tryptamine with secologanin to form strictosidine, the key intermediate of indole alkaloid biosynthesis. In Rauvolfia mannii, this protein is Strictosidine synthase (STR1).